The chain runs to 191 residues: Ribosome maturation factor RimM (191 aa).

In terms of domain architecture, PRC barrel spans 107 to 184; sequence EDDEWHQDDL…LVLVSPPPGL (78 aa).

This sequence belongs to the RimM family. Binds ribosomal protein uS19.

Its subcellular location is the cytoplasm. Its function is as follows. An accessory protein needed during the final step in the assembly of 30S ribosomal subunit, possibly for assembly of the head region. Essential for efficient processing of 16S rRNA. May be needed both before and after RbfA during the maturation of 16S rRNA. It has affinity for free ribosomal 30S subunits but not for 70S ribosomes. This chain is Ribosome maturation factor RimM, found in Kocuria rhizophila (strain ATCC 9341 / DSM 348 / NBRC 103217 / DC2201).